Reading from the N-terminus, the 210-residue chain is Cytochrome c biogenesis ATP-binding export protein CcmA (210 aa).

In terms of domain architecture, ABC transporter spans 1–208 (MHLNQLVISH…KVRTLSLDQF (208 aa)). Residue 38 to 45 (GHNGIGKT) coordinates ATP.

The protein belongs to the ABC transporter superfamily. CcmA exporter (TC 3.A.1.107) family. The complex is composed of two ATP-binding proteins (CcmA) and two transmembrane proteins (CcmB).

The protein localises to the cell inner membrane. It carries out the reaction heme b(in) + ATP + H2O = heme b(out) + ADP + phosphate + H(+). Functionally, part of the ABC transporter complex CcmAB involved in the biogenesis of c-type cytochromes; once thought to export heme, this seems not to be the case, but its exact role is uncertain. Responsible for energy coupling to the transport system. The polypeptide is Cytochrome c biogenesis ATP-binding export protein CcmA (Haemophilus ducreyi (strain 35000HP / ATCC 700724)).